The primary structure comprises 467 residues: RuvB-like helicase 2 (467 aa).

73–80 (GPPSTGKT) is a binding site for ATP.

This sequence belongs to the RuvB family. As to quaternary structure, may form heterododecamers with RVB1. Component of the SWR1 chromatin remodeling complex, the INO80 chromatin remodeling complex, and of the R2TP complex.

It is found in the nucleus. The enzyme catalyses ATP + H2O = ADP + phosphate + H(+). Functionally, DNA helicase which participates in several chromatin remodeling complexes, including the SWR1 and the INO80 complexes. The SWR1 complex mediates the ATP-dependent exchange of histone H2A for the H2A variant HZT1 leading to transcriptional regulation of selected genes by chromatin remodeling. The INO80 complex remodels chromatin by shifting nucleosomes and is involved in DNA repair. Also involved in pre-rRNA processing. In Kluyveromyces lactis (strain ATCC 8585 / CBS 2359 / DSM 70799 / NBRC 1267 / NRRL Y-1140 / WM37) (Yeast), this protein is RuvB-like helicase 2 (RVB2).